A 408-amino-acid polypeptide reads, in one-letter code: Acetylornithine aminotransferase (408 aa).

Pyridoxal 5'-phosphate-binding positions include 107–108 (GT) and phenylalanine 141. Arginine 144 is a binding site for N(2)-acetyl-L-ornithine. 227-230 (DEIQ) contacts pyridoxal 5'-phosphate. Lysine 256 bears the N6-(pyridoxal phosphate)lysine mark. Residue threonine 284 participates in N(2)-acetyl-L-ornithine binding. Threonine 285 lines the pyridoxal 5'-phosphate pocket.

The protein belongs to the class-III pyridoxal-phosphate-dependent aminotransferase family. ArgD subfamily. Homodimer. Pyridoxal 5'-phosphate is required as a cofactor.

The protein resides in the cytoplasm. It catalyses the reaction N(2)-acetyl-L-ornithine + 2-oxoglutarate = N-acetyl-L-glutamate 5-semialdehyde + L-glutamate. Its pathway is amino-acid biosynthesis; L-arginine biosynthesis; N(2)-acetyl-L-ornithine from L-glutamate: step 4/4. This is Acetylornithine aminotransferase from Xanthomonas axonopodis pv. citri (strain 306).